Here is a 177-residue protein sequence, read N- to C-terminus: Platelet glycoprotein IX (177 aa).

Positions 1–16 (MPAWGALFLLWATAEA) are cleaved as a signal peptide. Residues 17 to 51 (TKDCPSPCTCRALETMGLWVDCRGHGLTALPALPA) enclose the LRRNT domain. Topologically, residues 17–147 (TKDCPSPCTC…QLQASWVRPG (131 aa)) are extracellular. N-linked (GlcNAc...) asparagine glycosylation is present at Asn-60. The LRR repeat unit spans residues 60 to 83 (NNSLQSVPPGAFDHLPQLQTLDVT). Residues 85 to 137 (NPWHCDCSLTYLRLWLEDRTPEALLQVRCASPSLAAHGPLGRLTGYQLGSCGW) enclose the LRRCT domain. A helical transmembrane segment spans residues 148 to 168 (VLWDVALVAVAALGLALLAGL). Over 169 to 177 (LCATTEALD) the chain is Cytoplasmic.

As to quaternary structure, two GP-Ib beta are disulfide-linked to one GP-Ib alpha. GP-IX is complexed with the GP-Ib heterodimer via a non covalent linkage.

Its subcellular location is the membrane. The GPIb-V-IX complex functions as the vWF receptor and mediates vWF-dependent platelet adhesion to blood vessels. The adhesion of platelets to injured vascular surfaces in the arterial circulation is a critical initiating event in hemostasis. GP-IX may provide for membrane insertion and orientation of GP-Ib. This is Platelet glycoprotein IX (GP9) from Homo sapiens (Human).